A 247-amino-acid chain; its full sequence is Small ribosomal subunit protein eS6 (247 aa).

Positions 194–247 are disordered; the sequence is ALKKKRVTKKREDHAEYTKLLAQRMKEAKERKMERKRSNSRSKGDSIRESTSKK. Positions 217-247 are enriched in basic and acidic residues; sequence RMKEAKERKMERKRSNSRSKGDSIRESTSKK.

Belongs to the eukaryotic ribosomal protein eS6 family. In terms of processing, ribosomal protein S6 is the major substrate of protein kinases in eukaryote ribosomes.

Functionally, component of the 40S small ribosomal subunit. Plays an important role in controlling cell growth and proliferation through the selective translation of particular classes of mRNA. The sequence is that of Small ribosomal subunit protein eS6 (RPS6) from Aplysia californica (California sea hare).